The chain runs to 146 residues: Snaclec mucetin subunit beta (146 aa).

The first 23 residues, 1-23 (MGRFIFVSFGLLVVFISLSGTEA), serve as a signal peptide directing secretion. 3 cysteine pairs are disulfide-bonded: C27–C38, C55–C144, and C121–C136. In terms of domain architecture, C-type lectin spans 34-145 (YDEHCYQVFQ…CSSKRYVVCK (112 aa)).

This sequence belongs to the snaclec family. As to quaternary structure, dimer and tetramer of heterodimers of alpha and beta subunits ((alphabeta)(2) and (alphabeta)(4)); disulfide-linked. These two multimeric forms are found. The complex is glycosylated. As to expression, expressed by the venom gland.

The protein resides in the secreted. In terms of biological role, potent platelet activator that acts via GPIb (GP1BA/GP1BB). After activation by the toxin, the receptor is redistributed on platelet surface thanks to cytoskeletal translocation. The indirect activation of integrin alpha-IIb/beta-3 (ITGA2B/ITGB3) also induced by the toxin is downstream the cytoskeletal translocation of GPIb. This Protobothrops mucrosquamatus (Taiwan habu) protein is Snaclec mucetin subunit beta.